We begin with the raw amino-acid sequence, 354 residues long: NADH-ubiquinone oxidoreductase chain 2 (354 aa).

The next 10 helical transmembrane spans lie at 5-25 (ILMV…SSHH), 26-46 (WFTL…ILSY), 60-80 (FLVQ…QAWL), 96-116 (FLMT…YWFP), 122-142 (VGFI…FAVL), 149-169 (LNIS…GWGG), 198-218 (VSVA…VFFM), 242-262 (AGLV…GFLI), 274-294 (GCFI…FFYL), and 330-350 (VLLS…PVFI).

The protein belongs to the complex I subunit 2 family.

The protein resides in the mitochondrion inner membrane. It catalyses the reaction a ubiquinone + NADH + 5 H(+)(in) = a ubiquinol + NAD(+) + 4 H(+)(out). Its function is as follows. Core subunit of the mitochondrial membrane respiratory chain NADH dehydrogenase (Complex I) that is believed to belong to the minimal assembly required for catalysis. Complex I functions in the transfer of electrons from NADH to the respiratory chain. The immediate electron acceptor for the enzyme is believed to be ubiquinone. The protein is NADH-ubiquinone oxidoreductase chain 2 (ND2) of Patiria pectinifera (Starfish).